A 263-amino-acid polypeptide reads, in one-letter code: Acyl-[acyl-carrier-protein]--UDP-N-acetylglucosamine O-acyltransferase (263 aa).

Belongs to the transferase hexapeptide repeat family. LpxA subfamily. In terms of assembly, homotrimer.

Its subcellular location is the cytoplasm. The catalysed reaction is a (3R)-hydroxyacyl-[ACP] + UDP-N-acetyl-alpha-D-glucosamine = a UDP-3-O-[(3R)-3-hydroxyacyl]-N-acetyl-alpha-D-glucosamine + holo-[ACP]. It participates in glycolipid biosynthesis; lipid IV(A) biosynthesis; lipid IV(A) from (3R)-3-hydroxytetradecanoyl-[acyl-carrier-protein] and UDP-N-acetyl-alpha-D-glucosamine: step 1/6. Its function is as follows. Involved in the biosynthesis of lipid A, a phosphorylated glycolipid that anchors the lipopolysaccharide to the outer membrane of the cell. The sequence is that of Acyl-[acyl-carrier-protein]--UDP-N-acetylglucosamine O-acyltransferase from Caulobacter vibrioides (strain ATCC 19089 / CIP 103742 / CB 15) (Caulobacter crescentus).